The primary structure comprises 216 residues: MRINTVLFDLDGTLINTNELIISSFLHTLNTYYPNQYKREDVLPFIGPSLHDTFSKIDENKVEEMITSYRKFNHDHHDELVEEYETVYETVRELKRQGYKVGIVTTKARQTVEMGLQLSKLDEFFDVVVTIDDVENVKPHPEPLQKALELLDAKPEEALMVGDNHHDIVGGQNAGTKTAAVSWTLKGRAYLEAYKPDFMLDKMSDLLPILSNMNRS.

The active-site Nucleophile is the aspartate 9.

This sequence belongs to the HAD-like hydrolase superfamily. PpaX family. The cofactor is Mg(2+).

The catalysed reaction is diphosphate + H2O = 2 phosphate + H(+). In terms of biological role, hydrolyzes pyrophosphate formed during P-Ser-HPr dephosphorylation by HPrK/P. Might play a role in controlling the intracellular pyrophosphate pool. The sequence is that of Pyrophosphatase PpaX from Bacillus cereus (strain B4264).